A 440-amino-acid chain; its full sequence is Signal recognition particle 54 kDa protein (440 aa).

Residues 104–111 (GLQGSGKT), 184–188 (DTAGR), and 242–245 (TKLD) contribute to the GTP site.

This sequence belongs to the GTP-binding SRP family. SRP54 subfamily. As to quaternary structure, part of the signal recognition particle protein translocation system, which is composed of SRP and FtsY. Archaeal SRP consists of a 7S RNA molecule of 300 nucleotides and two protein subunits: SRP54 and SRP19.

It localises to the cytoplasm. It catalyses the reaction GTP + H2O = GDP + phosphate + H(+). Involved in targeting and insertion of nascent membrane proteins into the cytoplasmic membrane. Binds to the hydrophobic signal sequence of the ribosome-nascent chain (RNC) as it emerges from the ribosomes. The SRP-RNC complex is then targeted to the cytoplasmic membrane where it interacts with the SRP receptor FtsY. In Methanosarcina acetivorans (strain ATCC 35395 / DSM 2834 / JCM 12185 / C2A), this protein is Signal recognition particle 54 kDa protein.